The chain runs to 157 residues: UPF0262 protein Atu0536 (157 aa).

It belongs to the UPF0262 family.

The protein is UPF0262 protein Atu0536 of Agrobacterium fabrum (strain C58 / ATCC 33970) (Agrobacterium tumefaciens (strain C58)).